The primary structure comprises 289 residues: Testis-expressed protein 26 (289 aa).

The disordered stretch occupies residues 1 to 26 (MEQPGPRAPDPSLCHHNLQPTDDPNW). Mn stretches follow at residues 30–42 (ATTMRTAFTPKTG), 69–83 (QTQYSDEYTWKSHSK), 144–157 (ISLTKRDFVDRSKA), 179–193 (DTEFRRNYQIPAKIP), and 233–247 (QTTYQSDYDKTYPDF).

The sequence is that of Testis-expressed protein 26 (TEX26) from Homo sapiens (Human).